Consider the following 269-residue polypeptide: Shikimate dehydrogenase (NADP(+)) (269 aa).

Shikimate contacts are provided by residues 14–16 (SKS) and Thr-61. Catalysis depends on Lys-65, which acts as the Proton acceptor. Glu-77 provides a ligand contact to NADP(+). 2 residues coordinate shikimate: Asn-86 and Asp-102. NADP(+) is bound by residues 126-130 (GAGGA), 150-155 (NRTYEK), and Met-213. Tyr-215 is a shikimate binding site. Gly-237 contacts NADP(+).

This sequence belongs to the shikimate dehydrogenase family. As to quaternary structure, homodimer.

It catalyses the reaction shikimate + NADP(+) = 3-dehydroshikimate + NADPH + H(+). The protein operates within metabolic intermediate biosynthesis; chorismate biosynthesis; chorismate from D-erythrose 4-phosphate and phosphoenolpyruvate: step 4/7. Functionally, involved in the biosynthesis of the chorismate, which leads to the biosynthesis of aromatic amino acids. Catalyzes the reversible NADPH linked reduction of 3-dehydroshikimate (DHSA) to yield shikimate (SA). The sequence is that of Shikimate dehydrogenase (NADP(+)) from Aliivibrio fischeri (strain ATCC 700601 / ES114) (Vibrio fischeri).